The primary structure comprises 81 residues: MQPLVIIAIAALVVAIIIAIVVWTIVYIEYRRIKRQRKIDCLIDRIRERAEDSGNESEGEREELSKLVEMGHHAPWDVDDL.

The Extracellular portion of the chain corresponds to 1–7; it reads MQPLVII. The helical transmembrane segment at 8-28 threads the bilayer; it reads AIAALVVAIIIAIVVWTIVYI. The Cytoplasmic portion of the chain corresponds to 29 to 81; the sequence is EYRRIKRQRKIDCLIDRIRERAEDSGNESEGEREELSKLVEMGHHAPWDVDDL. The tract at residues 50–81 is disordered; the sequence is AEDSGNESEGEREELSKLVEMGHHAPWDVDDL. Phosphoserine; by host CK2 is present on residues Ser-53 and Ser-57. The segment covering 62-81 has biased composition (basic and acidic residues); that stretch reads EELSKLVEMGHHAPWDVDDL.

It belongs to the HIV-1 VPU protein family. In terms of assembly, homopentamer. Interacts with host CD4 and BRTC; these interactions induce proteasomal degradation of CD4. Interacts with host BST2; this interaction leads to the degradation of host BST2. Interacts with host FBXW11. Interacts with host AP1M1; this interaction plays a role in the mistrafficking and subsequent degradation of host BST2. Interacts with host RANBP2; this interaction allows Vpu to down-regulate host BLM sumoylation. In terms of processing, phosphorylated by host CK2. This phosphorylation is necessary for interaction with human BTRC and degradation of CD4.

It is found in the host membrane. Its activity is regulated as follows. Ion channel activity is inhibited by hexamethylene amiloride in vitro. Its function is as follows. Enhances virion budding by targeting host CD4 and Tetherin/BST2 to proteasome degradation. Degradation of CD4 prevents any unwanted premature interactions between viral Env and its host receptor CD4 in the endoplasmic reticulum. Degradation of antiretroviral protein Tetherin/BST2 is important for virion budding, as BST2 tethers new viral particles to the host cell membrane. Mechanistically, Vpu bridges either CD4 or BST2 to BTRC, a substrate recognition subunit of the Skp1/Cullin/F-box protein E3 ubiquitin ligase, induces their ubiquitination and subsequent proteasomal degradation. The alteration of the E3 ligase specificity by Vpu seems to promote the degradation of host IKBKB, leading to NF-kappa-B down-regulation and subsequent apoptosis. Acts as a viroporin that forms an oligomeric ion channel in membranes. Modulates the host DNA repair mechanisms to promote degradation of nuclear viral cDNA in cells that are already productively infected in order to suppress immune sensing and proviral hyper-integration (superinfection). Manipulates PML-NBs and modulates SUMOylation of host BLM protein thereby enhancing its DNA-end processing activity toward viral unintegrated linear DNA. Also inhibits RAD52-mediated homologous repair of viral cDNA, preventing the generation of dead-end circular forms of single copies of the long terminal repeat and permitting sustained nucleolytic attack. This chain is Protein Vpu, found in Human immunodeficiency virus type 1 group M subtype D (isolate NDK) (HIV-1).